The chain runs to 344 residues: Phosphate acyltransferase (344 aa).

It belongs to the PlsX family. As to quaternary structure, homodimer. Probably interacts with PlsY.

Its subcellular location is the cytoplasm. It carries out the reaction a fatty acyl-[ACP] + phosphate = an acyl phosphate + holo-[ACP]. The protein operates within lipid metabolism; phospholipid metabolism. In terms of biological role, catalyzes the reversible formation of acyl-phosphate (acyl-PO(4)) from acyl-[acyl-carrier-protein] (acyl-ACP). This enzyme utilizes acyl-ACP as fatty acyl donor, but not acyl-CoA. The protein is Phosphate acyltransferase of Yersinia pestis bv. Antiqua (strain Antiqua).